The following is a 355-amino-acid chain: Peptide chain release factor 1 (355 aa).

Position 233 is an N5-methylglutamine (glutamine 233).

This sequence belongs to the prokaryotic/mitochondrial release factor family. In terms of processing, methylated by PrmC. Methylation increases the termination efficiency of RF1.

The protein localises to the cytoplasm. In terms of biological role, peptide chain release factor 1 directs the termination of translation in response to the peptide chain termination codons UAG and UAA. In Amoebophilus asiaticus (strain 5a2), this protein is Peptide chain release factor 1.